The chain runs to 100 residues: Large ribosomal subunit protein bL27 (100 aa).

The propeptide occupies 1–9 (MLVMNLQLF).

The protein belongs to the bacterial ribosomal protein bL27 family. The N-terminus is cleaved by ribosomal processing cysteine protease Prp.

This is Large ribosomal subunit protein bL27 from Clostridium botulinum (strain Hall / ATCC 3502 / NCTC 13319 / Type A).